The chain runs to 202 residues: GTP cyclohydrolase 1 (202 aa).

Positions 90, 93, and 163 each coordinate Zn(2+).

It belongs to the GTP cyclohydrolase I family. As to quaternary structure, homomer.

The enzyme catalyses GTP + H2O = 7,8-dihydroneopterin 3'-triphosphate + formate + H(+). The protein operates within cofactor biosynthesis; 7,8-dihydroneopterin triphosphate biosynthesis; 7,8-dihydroneopterin triphosphate from GTP: step 1/1. In Mycobacterium ulcerans (strain Agy99), this protein is GTP cyclohydrolase 1.